A 342-amino-acid polypeptide reads, in one-letter code: Type II restriction enzyme CviAII (342 aa).

The catalysed reaction is Endonucleolytic cleavage of DNA to give specific double-stranded fragments with terminal 5'-phosphates.. A P subtype restriction enzyme that recognizes the double-stranded sequence 5'-CATG-3' and cleaves after C-1. This Chlorella (PBCV-1) protein is Type II restriction enzyme CviAII (CVIAIIR).